A 37-amino-acid polypeptide reads, in one-letter code: Large ribosomal subunit protein bL36 (37 aa).

This sequence belongs to the bacterial ribosomal protein bL36 family.

In Clostridioides difficile (strain 630) (Peptoclostridium difficile), this protein is Large ribosomal subunit protein bL36.